The sequence spans 1464 residues: Bridge-like lipid transfer protein family member 3B (1464 aa).

The Chorein N-terminal domain maps to 3 to 94 (GIIKKQILKH…DKVIMEMSTC (92 aa)). Disordered stretches follow at residues 267–297 (STEQ…TQTS) and 409–436 (DHNV…YPLK). Over residues 278-297 (PTQSSTVVASAQQVKTTQTS) the composition is skewed to polar residues. Phosphoserine occurs at positions 414, 418, 774, 935, and 1009. Disordered stretches follow at residues 1066-1089 (SKEE…PKER), 1164-1183 (LQNY…EGAQ), and 1392-1413 (QRSV…QSAN). Polar residues-rich tracts occupy residues 1164–1182 (LQNY…SEGA) and 1394–1413 (SVTQ…QSAN). Residues 1418–1456 (SFDFTREQLMEENESLKQELAKAKMALAEAHLEKDALLH) adopt a coiled-coil conformation.

As to quaternary structure, monomer. Homodimer (via N-terminus). Associates with the Golgi-associated retrograde protein (GARP) complex. Interacts with GARP complex component VPS52. Interacts (via C-terminal coiled-coil domain) with STX6.

It is found in the cytoplasm. The protein resides in the cytosol. The protein localises to the early endosome. Its function is as follows. Tube-forming lipid transport protein which mediates the transfer of lipids between membranes at organelle contact sites. Required for retrograde traffic of vesicle clusters in the early endocytic pathway to the Golgi complex. The sequence is that of Bridge-like lipid transfer protein family member 3B from Homo sapiens (Human).